Here is a 170-residue protein sequence, read N- to C-terminus: Adenine phosphoribosyltransferase (170 aa).

It belongs to the purine/pyrimidine phosphoribosyltransferase family. Homodimer.

The protein resides in the cytoplasm. The catalysed reaction is AMP + diphosphate = 5-phospho-alpha-D-ribose 1-diphosphate + adenine. It functions in the pathway purine metabolism; AMP biosynthesis via salvage pathway; AMP from adenine: step 1/1. Its function is as follows. Catalyzes a salvage reaction resulting in the formation of AMP, that is energically less costly than de novo synthesis. The sequence is that of Adenine phosphoribosyltransferase from Kosmotoga olearia (strain ATCC BAA-1733 / DSM 21960 / TBF 19.5.1).